We begin with the raw amino-acid sequence, 828 residues long: Mediator of RNA polymerase II transcription subunit 16 (828 aa).

5 WD repeats span residues 68–107 (GHQEVITSLEWDQSGSRLLSADADGRIKCWGMTDHLANSW), 199–241 (RCRV…VSEK), 264–308 (DKFP…LPLN), 622–663 (NQGS…CLPV), and 777–816 (FPTEPCKSCTRCGCVTMLKSPNKATAVKQWEQRWIKTCLC).

Belongs to the Mediator complex subunit 16 family. As to quaternary structure, component of the Mediator complex.

The protein localises to the nucleus. Functionally, component of the Mediator complex, a coactivator involved in the regulated transcription of nearly all RNA polymerase II-dependent genes. Mediator functions as a bridge to convey information from gene-specific regulatory proteins to the basal RNA polymerase II transcription machinery. Mediator is recruited to promoters by direct interactions with regulatory proteins and serves as a scaffold for the assembly of a functional preinitiation complex with RNA polymerase II and the general transcription factors. The chain is Mediator of RNA polymerase II transcription subunit 16 (med16) from Xenopus tropicalis (Western clawed frog).